Here is a 525-residue protein sequence, read N- to C-terminus: Probable pectinesterase/pectinesterase inhibitor 44 (525 aa).

An N-terminal signal peptide occupies residues 1–19 (MSCLKYFLILLMLGLCVSS). The interval 30–153 (VPASEFVSSI…YSMLRELLPL (124 aa)) is pectinesterase inhibitor 44. Residue Asn-98 is glycosylated (N-linked (GlcNAc...) asparagine). Residues 157–192 (EQKPKAVSKPGPIAKGPKAPPGRKLRDTDEDESLQF) form a disordered region. A pectinesterase 44 region spans residues 212 to 509 (DVSVALDGTG…FTVSQFIKGN (298 aa)). N-linked (GlcNAc...) asparagine glycans are attached at residues Asn-222 and Asn-278. Substrate is bound by residues Thr-287 and Gln-317. Asp-340 functions as the Proton donor; for pectinesterase activity in the catalytic mechanism. A disulfide bridge links Cys-354 with Cys-374. Asp-361 (nucleophile; for pectinesterase activity) is an active-site residue. Residues Asn-409 and Asn-421 are each glycosylated (N-linked (GlcNAc...) asparagine). Substrate contacts are provided by Arg-429 and Trp-431. 3 N-linked (GlcNAc...) asparagine glycosylation sites follow: Asn-443, Asn-492, and Asn-499.

In the N-terminal section; belongs to the PMEI family. It in the C-terminal section; belongs to the pectinesterase family. As to expression, expressed in siliques.

The protein resides in the secreted. It localises to the cell wall. The enzyme catalyses [(1-&gt;4)-alpha-D-galacturonosyl methyl ester](n) + n H2O = [(1-&gt;4)-alpha-D-galacturonosyl](n) + n methanol + n H(+). It functions in the pathway glycan metabolism; pectin degradation; 2-dehydro-3-deoxy-D-gluconate from pectin: step 1/5. In terms of biological role, acts in the modification of cell walls via demethylesterification of cell wall pectin. This is Probable pectinesterase/pectinesterase inhibitor 44 (PME44) from Arabidopsis thaliana (Mouse-ear cress).